The following is a 65-amino-acid chain: Small ribosomal subunit protein bS21 (65 aa).

A disordered region spans residues 43-65 (VDDRLKRARSKRRAQRANEESNA). Basic residues predominate over residues 48–57 (KRARSKRRAQ).

The protein belongs to the bacterial ribosomal protein bS21 family.

The sequence is that of Small ribosomal subunit protein bS21 from Chloroherpeton thalassium (strain ATCC 35110 / GB-78).